We begin with the raw amino-acid sequence, 88 residues long: Small ribosomal subunit protein bS20 (88 aa).

The protein belongs to the bacterial ribosomal protein bS20 family. Part of the 30S ribosomal subunit.

Its function is as follows. Binds directly to 16S ribosomal RNA. The polypeptide is Small ribosomal subunit protein bS20 (rpsT) (Bacillus subtilis (strain 168)).